A 451-amino-acid polypeptide reads, in one-letter code: Lipase member H (451 aa).

Residues 1 to 16 (MLRLCFLLSFMCLVKS) form the signal peptide. An N-linked (GlcNAc...) asparagine glycan is attached at asparagine 66. Serine 154 acts as the Nucleophile in catalysis. Aspartate 178 (charge relay system) is an active-site residue. A disulfide bond links cysteine 233 and cysteine 246. Histidine 248 functions as the Charge relay system in the catalytic mechanism. 3 disulfides stabilise this stretch: cysteine 270–cysteine 281, cysteine 284–cysteine 292, and cysteine 427–cysteine 446.

It belongs to the AB hydrolase superfamily. Lipase family. Interacts with TTMP/C3orf52.

It is found in the secreted. It localises to the cell membrane. It catalyses the reaction 1-hexadecanoyl-2-(9Z-octadecenoyl)-sn-glycero-3-phosphate + H2O = 2-(9Z-octadecenoyl)-sn-glycero-3-phosphate + hexadecanoate + H(+). Functionally, hydrolyzes specifically phosphatidic acid (PA) to produce 2-acyl lysophosphatidic acid (LPA; a potent bioactive lipid mediator) and fatty acid. Does not hydrolyze other phospholipids, like phosphatidylserine (PS), phosphatidylcholine (PC) and phosphatidylethanolamine (PE) or triacylglycerol (TG). The protein is Lipase member H (Liph) of Rattus norvegicus (Rat).